The sequence spans 240 residues: MRPNNRAVNEPRPIKITRHYTKHAEGSVLVEFGDTKVICTATVEDSVPRFLKGQGQGWVTAEYGMLPRSTHSRMLREAAKGKQGGRTMEIQRLIARSLRAMVDLTALGERSITLDCDVIQADGGTRTASITGACVALTDAINALVENGTLKTSPLKGLVAAVSVGIVNGEAVCDLEYVEDSAAETDMNVVMMEDGRMIEVQGTAEGEPFSHEELLTLLNLAKQGCNMIFDAQRRALAADC.

Phosphate is bound by residues arginine 86 and 124-126; that span reads GTR.

This sequence belongs to the RNase PH family. As to quaternary structure, homohexameric ring arranged as a trimer of dimers.

It carries out the reaction tRNA(n+1) + phosphate = tRNA(n) + a ribonucleoside 5'-diphosphate. Phosphorolytic 3'-5' exoribonuclease that plays an important role in tRNA 3'-end maturation. Removes nucleotide residues following the 3'-CCA terminus of tRNAs; can also add nucleotides to the ends of RNA molecules by using nucleoside diphosphates as substrates, but this may not be physiologically important. Probably plays a role in initiation of 16S rRNA degradation (leading to ribosome degradation) during starvation. This chain is Ribonuclease PH, found in Mannheimia succiniciproducens (strain KCTC 0769BP / MBEL55E).